The sequence spans 103 residues: Large ribosomal subunit protein P1 (103 aa).

The disordered stretch occupies residues 66–103; sequence PAAGAPAAGAAGGAVEEKKEEKKAESEDESDDDMGLFD. The span at 80 to 90 shows a compositional bias: basic and acidic residues; the sequence is VEEKKEEKKAE. A compositionally biased stretch (acidic residues) spans 91–103; it reads SEDESDDDMGLFD.

Belongs to the eukaryotic ribosomal protein P1/P2 family. In terms of assembly, P1 and P2 exist as dimers at the large ribosomal subunit.

Functionally, plays an important role in the elongation step of protein synthesis. This chain is Large ribosomal subunit protein P1, found in Polyorchis penicillatus (Hydromedusa).